A 381-amino-acid chain; its full sequence is UDP-4-amino-4-deoxy-L-arabinose--oxoglutarate aminotransferase (381 aa).

N6-(pyridoxal phosphate)lysine is present on Lys-182.

The protein belongs to the DegT/DnrJ/EryC1 family. ArnB subfamily. As to quaternary structure, homodimer. Pyridoxal 5'-phosphate serves as cofactor.

It catalyses the reaction UDP-4-amino-4-deoxy-beta-L-arabinose + 2-oxoglutarate = UDP-beta-L-threo-pentopyranos-4-ulose + L-glutamate. Its pathway is nucleotide-sugar biosynthesis; UDP-4-deoxy-4-formamido-beta-L-arabinose biosynthesis; UDP-4-deoxy-4-formamido-beta-L-arabinose from UDP-alpha-D-glucuronate: step 2/3. It participates in bacterial outer membrane biogenesis; lipopolysaccharide biosynthesis. Catalyzes the conversion of UDP-4-keto-arabinose (UDP-Ara4O) to UDP-4-amino-4-deoxy-L-arabinose (UDP-L-Ara4N). The modified arabinose is attached to lipid A and is required for resistance to polymyxin and cationic antimicrobial peptides. This is UDP-4-amino-4-deoxy-L-arabinose--oxoglutarate aminotransferase from Proteus mirabilis (strain HI4320).